We begin with the raw amino-acid sequence, 111 residues long: Small ribosomal subunit protein bS16 (111 aa).

This sequence belongs to the bacterial ribosomal protein bS16 family.

This is Small ribosomal subunit protein bS16 from Rickettsia canadensis (strain McKiel).